The following is a 788-amino-acid chain: DNA ligase (788 aa).

NAD(+) is bound by residues 35–39 (DAEYD), 84–85 (SL), and Glu124. Residue Lys126 is the N6-AMP-lysine intermediate of the active site. Positions 147, 184, 300, and 324 each coordinate NAD(+). Residues Cys418, Cys421, Cys448, and Cys454 each contribute to the Zn(2+) site. The 82-residue stretch at 707–788 (AEGLPLAGQT…FIERLAQLGS (82 aa)) folds into the BRCT domain.

The protein belongs to the NAD-dependent DNA ligase family. LigA subfamily. Mg(2+) is required as a cofactor. Requires Mn(2+) as cofactor.

It catalyses the reaction NAD(+) + (deoxyribonucleotide)n-3'-hydroxyl + 5'-phospho-(deoxyribonucleotide)m = (deoxyribonucleotide)n+m + AMP + beta-nicotinamide D-nucleotide.. DNA ligase that catalyzes the formation of phosphodiester linkages between 5'-phosphoryl and 3'-hydroxyl groups in double-stranded DNA using NAD as a coenzyme and as the energy source for the reaction. It is essential for DNA replication and repair of damaged DNA. This Stutzerimonas stutzeri (strain A1501) (Pseudomonas stutzeri) protein is DNA ligase.